We begin with the raw amino-acid sequence, 91 residues long: HssA/B-like protein 52 (91 aa).

Disordered regions lie at residues 1–20 and 72–91; these read MTLF…SKSS and GGCG…CCGI.

The protein belongs to the hssA/B family.

This Dictyostelium discoideum (Social amoeba) protein is HssA/B-like protein 52 (hssl52).